Here is a 340-residue protein sequence, read N- to C-terminus: Organic solute transporter subunit alpha (340 aa).

Topologically, residues 1 to 48 (MEPGRTQIKLDPRYTADLLEVLKTNYGIPSACFSQPPTAAQLLRALGP) are extracellular. Residues 49 to 69 (VELALTSILTLLALGSIAIFL) form a helical membrane-spanning segment. Over 70-87 (EDAVYLYKNTLCPIKRRT) the chain is Cytoplasmic. A helical transmembrane segment spans residues 88-108 (LLWKSSAPTVVSVLCCFGLWI). The Extracellular portion of the chain corresponds to 109–118 (PRSLVLVEMT). A helical transmembrane segment spans residues 119-139 (ITSFYAVCFYLLMLVMVEGFG). Topologically, residues 140 to 181 (GKEAVLRTLRDTPMMVHTGPCCCCCPCCPRLLLTRKKLQLLM) are cytoplasmic. Residues 182–202 (LGPFQYAFLKITLTLVGLFLV) traverse the membrane as a helical segment. Topologically, residues 203-218 (PDGIYDPADISEGSTA) are extracellular. Residues 219–239 (LWINTFLGVSTLLALWTLGII) traverse the membrane as a helical segment. Over 240-255 (SRQARLHLGEQNMGAK) the chain is Cytoplasmic. The chain crosses the membrane as a helical span at residues 256–276 (FALFQVLLILTALQPSIFSVL). Topologically, residues 277 to 294 (ANGGQIACSPPYSSKTRS) are extracellular. The helical transmembrane segment at 295-317 (QVMNCHLLILETFLMTVLTRMYY) threads the bilayer. Residues 318 to 340 (RRKDHKVGYETFSSPDLDLNLKA) lie on the Cytoplasmic side of the membrane. Serine 330 carries the post-translational modification Phosphoserine.

Belongs to the OST-alpha family. As to quaternary structure, interacts with SLC51B. The Ost-alpha/Ost-beta complex is a heterodimer composed of alpha (SLC51A) and beta (SLC51B) subunit. In terms of tissue distribution, widely expressed with a high expression in ileum. Expressed in testis, colon, liver, small intestine, kidney, ovary and adrenal gland; and at low levels in heart, lung, brain, pituitary, thyroid gland, uterus, prostate, mammary gland and fat.

The protein resides in the cell membrane. Its subcellular location is the endoplasmic reticulum membrane. The enzyme catalyses taurocholate(out) = taurocholate(in). The catalysed reaction is estrone 3-sulfate(out) = estrone 3-sulfate(in). It catalyses the reaction dehydroepiandrosterone 3-sulfate(out) = dehydroepiandrosterone 3-sulfate(in). It carries out the reaction tauroursodeoxycholate(out) = tauroursodeoxycholate(in). The enzyme catalyses glycoursodeoxycholate(out) = glycoursodeoxycholate(in). The catalysed reaction is glycocholate(out) = glycocholate(in). It catalyses the reaction taurochenodeoxycholate(out) = taurochenodeoxycholate(in). It carries out the reaction glycochenodeoxycholate(out) = glycochenodeoxycholate(in). The enzyme catalyses taurodeoxycholate(out) = taurodeoxycholate(in). The catalysed reaction is glycodeoxycholate(out) = glycodeoxycholate(in). It catalyses the reaction prostaglandin E2(out) = prostaglandin E2(in). Its function is as follows. Essential component of the Ost-alpha/Ost-beta complex, a heterodimer that acts as the intestinal basolateral transporter responsible for bile acid export from enterocytes into portal blood. Efficiently transports the major species of bile acids (taurocholate). Taurine conjugates are transported more efficiently across the basolateral membrane than glycine-conjugated bile acids. Can also transport steroids such as estrone 3-sulfate and dehydroepiandrosterone 3-sulfate, therefore playing a role in the enterohepatic circulation of sterols. Able to transport eicosanoids such as prostaglandin E2. The protein is Organic solute transporter subunit alpha (SLC51A) of Homo sapiens (Human).